The chain runs to 355 residues: MAEFVRAQIFGTTFEITSRYTDLQPVGMGAFGLVCSAKDQLTNQAVAVKKIMKPFSTPVLSKRTYRELKLLKHLRHENIISLSDIFISPLEDIYFVTELLGTDLHRLLTSRPLEKQFIQYFLYQILRGLKYVHSAGVVHRDLKPSNILVNENCDLKICDFGLARIQDPQMTGYVSTRYYRAPEIMLTWQKYDVEVDIWSAGCIFAEMLEGKPLFPGKDHVNQFSIITELLGTPPDDVIQTICSENTLRFVQSLPKRERQPLANKFKNAEPDAVDLLENMLVFDPRKRVRAEQALAHPYLAPYHDPTDEPVADEKFDWSFNDADLPVDTWKIMMYSEILDYHNVDAAVPEQENNGS.

A Protein kinase domain is found at 20 to 299 (YTDLQPVGMG…AEQALAHPYL (280 aa)). ATP contacts are provided by residues 26–34 (VGMGAFGLV) and Lys-49. Residue Asp-141 is the Proton acceptor of the active site. Thr-171 carries the phosphothreonine modification. Positions 171–173 (TGY) match the TXY motif. Position 173 is a phosphotyrosine (Tyr-173).

The protein belongs to the protein kinase superfamily. Ser/Thr protein kinase family. MAP kinase subfamily. HOG1 sub-subfamily. The cofactor is Mg(2+). Dually phosphorylated on Thr-171 and Tyr-173, which activates the enzyme. Phosphorylation is induced by osmotic stress and the presence of the antifungal agent iprodione.

It is found in the cytoplasm. The protein resides in the nucleus. The catalysed reaction is L-seryl-[protein] + ATP = O-phospho-L-seryl-[protein] + ADP + H(+). The enzyme catalyses L-threonyl-[protein] + ATP = O-phospho-L-threonyl-[protein] + ADP + H(+). With respect to regulation, activated by tyrosine and threonine phosphorylation. Its function is as follows. Proline-directed serine/threonine-protein kinase involved in a signal transduction pathway that is activated by changes in the osmolarity of the extracellular environment. Controls osmotic regulation of transcription of target genes. The polypeptide is Mitogen-activated protein kinase HOG1 (HOG1) (Cochliobolus heterostrophus (Southern corn leaf blight fungus)).